The sequence spans 208 residues: ATP-dependent Clp protease proteolytic subunit 1 (208 aa).

The active-site Nucleophile is the Ser-108. The active site involves His-133.

The protein belongs to the peptidase S14 family. Fourteen ClpP subunits assemble into 2 heptameric rings which stack back to back to give a disk-like structure with a central cavity, resembling the structure of eukaryotic proteasomes.

Its subcellular location is the cytoplasm. The catalysed reaction is Hydrolysis of proteins to small peptides in the presence of ATP and magnesium. alpha-casein is the usual test substrate. In the absence of ATP, only oligopeptides shorter than five residues are hydrolyzed (such as succinyl-Leu-Tyr-|-NHMec, and Leu-Tyr-Leu-|-Tyr-Trp, in which cleavage of the -Tyr-|-Leu- and -Tyr-|-Trp bonds also occurs).. Its function is as follows. Cleaves peptides in various proteins in a process that requires ATP hydrolysis. Has a chymotrypsin-like activity. Plays a major role in the degradation of misfolded proteins. This is ATP-dependent Clp protease proteolytic subunit 1 from Corynebacterium efficiens (strain DSM 44549 / YS-314 / AJ 12310 / JCM 11189 / NBRC 100395).